Consider the following 361-residue polypeptide: Cell cycle control protein 50A (361 aa).

The interval 1 to 28 (MAMNYNAKDEVDGGPPCPPGGTAKTRRP) is disordered. A2 bears the N-acetylalanine mark. The tract at residues 2-48 (AMNYNAKDEVDGGPPCPPGGTAKTRRPDNTAFKQQRLPAWQPILTAG) is required for ATPase and aminophospholipid flippase activity. Residues 2–49 (AMNYNAKDEVDGGPPCPPGGTAKTRRPDNTAFKQQRLPAWQPILTAGT) lie on the Cytoplasmic side of the membrane. The segment at 49-348 (TVLPTFFIIG…LGVVLLVINH (300 aa)) is interaction with ATP8A2. Residues 50–70 (VLPTFFIIGLIFIPIGIGIFV) traverse the membrane as a helical segment. The Exoplasmic loop segment spans residues 71–325 (TSNNIREIEI…SWMGGKNPFL (255 aa)). 3 disulfides stabilise this stretch: C91–C104, C94–C102, and C157–C171. N180, N190, and N294 each carry an N-linked (GlcNAc...) asparagine glycan. The chain crosses the membrane as a helical span at residues 326–346 (GIAYITIGSISFLLGVVLLVI). The Cytoplasmic segment spans residues 347-361 (NHKYRNSSNTADITI).

This sequence belongs to the CDC50/LEM3 family. In terms of assembly, component of various P4-ATPase flippase complexes which consists of a catalytic alpha subunit and an accessory beta subunit. Interacts with ATP8A1 to form a flippase complex; this complex forms an intermediate phosphoenzyme. Interacts with ATP8A2 to form a flippase complex. ATP8B1:TMEM30A and ATP8B2:TMEM30A flippase complexes have been shown to form intermediate phosphoenzymes in vitro. Interacts with alpha subunits ATP8A1, ATP8B1, ATP8B2, ATP8B4, ATP10A, ATP10B, ATP10D, ATP11A, ATP11B and ATP11C. N-glycosylated; contributes to ATP8A2:TMEM30A flippase complex assembly but not to functional activity. In terms of tissue distribution, expressed in photoreceptor cells; detected in retina outer segment and other retinal layers (at protein level).

It is found in the membrane. Its subcellular location is the golgi apparatus. It localises to the cytoplasmic vesicle. The protein localises to the secretory vesicle membrane. The protein resides in the apical cell membrane. It is found in the photoreceptor inner segment. Its subcellular location is the cell projection. It localises to the cilium. The protein localises to the photoreceptor outer segment. Functionally, accessory component of a P4-ATPase flippase complex which catalyzes the hydrolysis of ATP coupled to the transport of aminophospholipids from the outer to the inner leaflet of various membranes and ensures the maintenance of asymmetric distribution of phospholipids. Phospholipid translocation also seems to be implicated in vesicle formation and in uptake of lipid signaling molecules. The beta subunit may assist in binding of the phospholipid substrate. Required for the proper folding, assembly and ER to Golgi exit of the ATP8A2:TMEM30A flippase complex. ATP8A2:TMEM30A may be involved in regulation of neurite outgrowth, and, reconstituted to liposomes, predomiminantly transports phosphatidylserine (PS) and to a lesser extent phosphatidylethanolamine (PE). The ATP8A1:TMEM30A flippase complex seems to play a role in regulation of cell migration probably involving flippase-mediated translocation of phosphatidylethanolamine (PE) at the plasma membrane. Required for the formation of the ATP8A2, ATP8B1 and ATP8B2 P-type ATPAse intermediate phosphoenzymes. Involved in uptake of platelet-activating factor (PAF). Can also mediate the export of alpha subunits ATP8A1, ATP8B1, ATP8B2, ATP8B4, ATP10A, ATP10B, ATP10D, ATP11A, ATP11B and ATP11C from the ER to other membrane localizations. This is Cell cycle control protein 50A from Bos taurus (Bovine).